The primary structure comprises 796 residues: Polyribonucleotide nucleotidyltransferase (796 aa).

Mg(2+)-binding residues include Asp-490 and Asp-496. Residues 557–616 enclose the KH domain; that stretch reads PRIESIFINKDKIRNVIGSGGKNIRDICEKTGAKIEIIQDGTVMIYAVNNEAVEYAKSMI. One can recognise an S1 motif domain in the interval 626–693; that stretch reads GKVFEGTVVE…DREHIQLSMR (68 aa). Low complexity-rich tracts occupy residues 717–728, 747–759, and 769–784; these read DDSCGSTGGSSF, GGSS…NSNG, and SSNG…SNSR. A disordered region spans residues 717-796; that stretch reads DDSCGSTGGS…HDVPRKPRFF (80 aa). Residues 785–796 are compositionally biased toward basic and acidic residues; sequence NGHDVPRKPRFF.

The protein belongs to the polyribonucleotide nucleotidyltransferase family. Mg(2+) serves as cofactor.

It localises to the cytoplasm. It carries out the reaction RNA(n+1) + phosphate = RNA(n) + a ribonucleoside 5'-diphosphate. Functionally, involved in mRNA degradation. Catalyzes the phosphorolysis of single-stranded polyribonucleotides processively in the 3'- to 5'-direction. This is Polyribonucleotide nucleotidyltransferase from Ehrlichia chaffeensis (strain ATCC CRL-10679 / Arkansas).